The sequence spans 331 residues: UPF0194 membrane protein YbhG (331 aa).

The signal sequence occupies residues 1 to 19; sequence MKKPVVIGLAIAAIVAVIA. The stretch at 107–208 forms a coiled coil; the sequence is EEIAQAAAAV…LDLQDTTLIA (102 aa).

It belongs to the UPF0194 family.

It is found in the periplasm. The polypeptide is UPF0194 membrane protein YbhG (Salmonella gallinarum (strain 287/91 / NCTC 13346)).